The following is a 1258-amino-acid chain: MEKYVRLQKIGEGSFGKAILVKSTEDGRQYVIKEINISRMSSKEREESRREVAVLANMKHPNIVQYRESFEENGSLYIVMDYCEGGDLFKRINAQKGVLFQEDQILDWFVQICLALKHVHDRKILHRDIKSQNIFLTKDGTVQLGDFGIARVLNSTVELARTCIGTPYYLSPEICENKPYNNKSDIWALGCVLYELCTLKHAFEAGSMKNLVLKIISGSFPPVSLHYSYDLRSLVSQLFKRNPRDRPSVNSILEKGFIAKRIEKFLSPQLIAEEFCLKTFSKFGSQPIPAKRPASGQNSISVMPAQKITKPAAKYGIPLAYKKYGDKKLHEKKPLQKHKQAHQTPEKRVNTGEERRKISEEAARKRRLEFIEKEKKQKDQIISLMKAEQMKRQEKERLERINRAREQGWRNVLSAGGSGEVKAPFLGSGGTIAPSSFSSRGQYEHYHAIFDQMQQQRAEDNEAKWKREIYGRGLPERGILPGVRPGFPYGAAGHHHFPDADDIRKTLKRLKAVSKQANANRQKGQLAVERAKQVEEFLQRKREAMQNKARAEGHMVYLARLRQIRLQNFNERQQIKAKLRGEKKEANHSEGQEGSEEADMRRKKIESLKAHANARAAVLKEQLERKRKEAYEREKKVWEEHLVAKGVKSSDVSPPLGQHETGGSPSKQQMRSVISVTSALKEVGVDSSLTDTRETSEEMQKTNNAISSKREILRRLNENLKAQEDEKGKQNLSDTFEINVHEDAKEHEKEKSVSSDRKKWEAGGQLVIPLDELTLDTSFSTTERHTVGEVIKLGPNGSPRRAWGKSPTDSVLKILGEAELQLQTELLENTTIRSEISPEGEKYKPLITGEKKVQCISHEINPSAIVDSPVETKSPEFSEASPQMSLKLEGNLEEPDDLETEILQEPSGTNKDESLPCTITDVWISEEKETKETQSADRITIQENEVSEDGVSSTVDQLSDIHIEPGTNDSQHSKCDVDKSVQPEPFFHKVVHSEHLNLVPQVQSVQCSPEESFAFRSHSHLPPKNKNKNSLLIGLSTGLFDANNPKMLRTCSLPDLSKLFRTLMDVPTVGDVRQDNLEIDEIEDENIKEGPSDSEDIVFEETDTDLQELQASMEQLLREQPGEEYSEEEESVLKNSDVEPTANGTDVADEDDNPSSESALNEEWHSDNSDGEIASECECDSVFNHLEELRLHLEQEMGFEKFFEVYEKIKAIHEDEDENIEICSKIVQNILGNEHQHLYAKILHLVMADGAYQEDNDE.

A Protein kinase domain is found at 4–258; that stretch reads YVRLQKIGEG…VNSILEKGFI (255 aa). ATP contacts are provided by residues 10–18 and lysine 33; that span reads IGEGSFGKA. Residue aspartate 128 is the Proton acceptor of the active site. Threonine 156 is subject to Phosphothreonine. Residue threonine 162 is modified to Phosphothreonine; by autocatalysis. Residues 330–360 are disordered; that stretch reads HEKKPLQKHKQAHQTPEKRVNTGEERRKISE. Positions 344 to 360 are enriched in basic and acidic residues; the sequence is TPEKRVNTGEERRKISE. Phosphoserine is present on residues serine 414, serine 418, serine 428, and serine 438. Disordered stretches follow at residues 578-600, 648-669, and 685-704; these read KLRGEKKEANHSEGQEGSEEADM, KSSDVSPPLGQHETGGSPSKQQ, and VDSSLTDTRETSEEMQKTNN. The span at 579–591 shows a compositional bias: basic and acidic residues; it reads LRGEKKEANHSEG. At serine 653 the chain carries Phosphoserine. Threonine 661 is subject to Phosphothreonine. The residue at position 664 (serine 664) is a Phosphoserine. Residues 691–700 are compositionally biased toward basic and acidic residues; it reads DTRETSEEMQ. Serine 798, serine 834, serine 868, serine 881, serine 1052, and serine 1126 each carry phosphoserine. A disordered region spans residues 1118–1171; that stretch reads REQPGEEYSEEEESVLKNSDVEPTANGTDVADEDDNPSSESALNEEWHSDNSDG.

Belongs to the protein kinase superfamily. NEK Ser/Thr protein kinase family. NIMA subfamily. As to quaternary structure, binds to CBY2. Found in a complex with CFAP410, NEK1 and SPATA7. Interacts with CFAP410. Interacts (via Ser-1052 phosphorylated form) with 14-3-3 proteins. Requires Mg(2+) as cofactor. High fetal expression in the brain and kidney.

It is found in the nucleus. The protein localises to the cytoplasm. Its subcellular location is the cytoskeleton. It localises to the microtubule organizing center. The protein resides in the centrosome. The enzyme catalyses L-seryl-[protein] + ATP = O-phospho-L-seryl-[protein] + ADP + H(+). The catalysed reaction is L-threonyl-[protein] + ATP = O-phospho-L-threonyl-[protein] + ADP + H(+). Phosphorylates serines and threonines, but also appears to possess tyrosine kinase activity. Involved in DNA damage checkpoint control and for proper DNA damage repair. In response to injury that includes DNA damage, NEK1 phosphorylates VDAC1 to limit mitochondrial cell death. May be implicated in the control of meiosis. Involved in cilium assembly. The protein is Serine/threonine-protein kinase Nek1 (NEK1) of Homo sapiens (Human).